A 201-amino-acid chain; its full sequence is Cytochrome c oxidase assembly protein CtaG (201 aa).

The Cytoplasmic portion of the chain corresponds to 1–12; sequence MTDQGENEKKQR. The chain crosses the membrane as a helical; Signal-anchor for type II membrane protein span at residues 13–35; the sequence is RSNATIAVACLSFFVCMIGAAYA. Over 36 to 201 the chain is Periplasmic; that stretch reads SVPLYRIFCQ…KAVGSTRNGG (166 aa).

The protein belongs to the COX11/CtaG family.

The protein resides in the cell inner membrane. Its function is as follows. Exerts its effect at some terminal stage of cytochrome c oxidase synthesis, probably by being involved in the insertion of the copper B into subunit I. This chain is Cytochrome c oxidase assembly protein CtaG, found in Brucella suis biovar 1 (strain 1330).